A 189-amino-acid chain; its full sequence is Protein Rex (189 aa).

The span at methionine 1–proline 16 shows a compositional bias: basic residues. Positions methionine 1–leucine 26 are disordered. The Nuclear localization signal, and RNA-binding (RxRE) signature appears at proline 2–threonine 18. The interval arginine 56–serine 70 is homomultimerization. Phosphoserine; by host is present on serine 70. The Nuclear export signal motif lies at leucine 82–glycine 93. The interval tyrosine 87–arginine 189 is disordered. Residues isoleucine 115–serine 125 are compositionally biased toward pro residues. Positions proline 123–threonine 131 are homomultimerization. Threonine 174 carries the post-translational modification Phosphothreonine; by host. A Phosphoserine; by host modification is found at serine 177. Residues phenylalanine 178–arginine 189 are compositionally biased toward pro residues.

Belongs to the deltaretrovirus Rex protein family. As to quaternary structure, homomultimer. Multimeric assembly is essential for activity and involves XPO1. Binds to human XPO1 and KPNB1. Interacts (via N-terminal nuclear localization signal) with human NPM1. In terms of processing, phosphorylated.

The protein localises to the host nucleus. The protein resides in the host nucleolus. It is found in the host cytoplasm. Its function is as follows. Rex escorts unspliced gag-pro-pol and singly spliced env mRNAs out of the nucleus of infected cells. These mRNAs carry a recognition sequence called Rex responsive element (RxRE or XRE) located at the 3' region of the long terminal repeat (LTR). This function is essential since most HTLV proteins are translated from unspliced or partially spliced pre-mRNAs that cannot exit the nucleus by the pathway used by fully processed cellular mRNAs. Rex itself is translated from a fully spliced mRNA that probably readily exits the nucleus. Rex's nuclear localization signal (NLS) binds directly to KPNB1/importin beta-1 without previous binding to KPNA1/importin alpha-1. KPNB1 binds to the GDP bound form of RAN (Ran-GDP) and targets Rex to the nucleus. In the nucleus, the conversion from Ran-GDP to Ran-GTP dissociates Rex from KPNB1 and allows Rex's binding to the RRE in viral pre-mRNAs. Rex multimerizes on the RRE via cooperative assembly. This multimerization is critical for its full biological activity, since it may shield the viral RNA from being spliced or down-regulated, and probably exposes Rex's nuclear export signal (NES) to the surface. Rex can then form a complex with XPO1/CRM1, RANBP3 and Ran-GTP, leading to nuclear export of the complex. Conversion from Ran-GTP to Ran-GDP mediates dissociation of the Rex/RRE/XPO1/RANBP3/RAN complex, so that Rex can return to the nucleus for a subsequent round of export. The protein is Protein Rex of Homo sapiens (Human).